The chain runs to 944 residues: uncharacterized protein (944 aa).

This is an uncharacterized protein from Ureaplasma parvum serovar 3 (strain ATCC 700970).